A 156-amino-acid chain; its full sequence is Acanthoscurrin-1 (156 aa).

The first 23 residues, 1–23 (MAFRMKLVVCIVLLSTLAVMSSA), serve as a signal peptide directing secretion. Residue lysine 155 is modified to Lysine amide.

In terms of tissue distribution, expressed in hemocytes and secreted into the plasma following bacterial immune challenge.

It localises to the secreted. In terms of biological role, antimicrobial protein. Strong activity against the Gram-negative bacterium E.coli SBS363 and yeast C.albicans. No detectable activity against the Gram-positive bacterium M.luteus. This Acanthoscurria gomesiana (Tarantula spider) protein is Acanthoscurrin-1.